The primary structure comprises 263 residues: Hydroxyethylthiazole kinase (263 aa).

Residue Met-39 participates in substrate binding. Lys-115 and Thr-160 together coordinate ATP. Gly-187 is a binding site for substrate.

It belongs to the Thz kinase family. Mg(2+) serves as cofactor.

The enzyme catalyses 5-(2-hydroxyethyl)-4-methylthiazole + ATP = 4-methyl-5-(2-phosphooxyethyl)-thiazole + ADP + H(+). Its pathway is cofactor biosynthesis; thiamine diphosphate biosynthesis; 4-methyl-5-(2-phosphoethyl)-thiazole from 5-(2-hydroxyethyl)-4-methylthiazole: step 1/1. Its function is as follows. Catalyzes the phosphorylation of the hydroxyl group of 4-methyl-5-beta-hydroxyethylthiazole (THZ). The sequence is that of Hydroxyethylthiazole kinase from Staphylococcus haemolyticus (strain JCSC1435).